We begin with the raw amino-acid sequence, 199 residues long: FMN-dependent NADH:quinone oxidoreductase (199 aa).

Residues Ser9, 15-17 (SNS), and 95-98 (MYNF) contribute to the FMN site.

It belongs to the azoreductase type 1 family. In terms of assembly, homodimer. Requires FMN as cofactor.

The enzyme catalyses 2 a quinone + NADH + H(+) = 2 a 1,4-benzosemiquinone + NAD(+). It catalyses the reaction N,N-dimethyl-1,4-phenylenediamine + anthranilate + 2 NAD(+) = 2-(4-dimethylaminophenyl)diazenylbenzoate + 2 NADH + 2 H(+). Quinone reductase that provides resistance to thiol-specific stress caused by electrophilic quinones. Its function is as follows. Also exhibits azoreductase activity. Catalyzes the reductive cleavage of the azo bond in aromatic azo compounds to the corresponding amines. The sequence is that of FMN-dependent NADH:quinone oxidoreductase from Aromatoleum aromaticum (strain DSM 19018 / LMG 30748 / EbN1) (Azoarcus sp. (strain EbN1)).